A 306-amino-acid chain; its full sequence is Curved DNA-binding protein (306 aa).

A J domain is found at 5–69 (DYYAIMGVKP…QRRAEYDQLW (65 aa)).

The protein localises to the cytoplasm. Its subcellular location is the nucleoid. DNA-binding protein that preferentially recognizes a curved DNA sequence. It is probably a functional analog of DnaJ; displays overlapping activities with DnaJ, but functions under different conditions, probably acting as a molecular chaperone in an adaptive response to environmental stresses other than heat shock. Lacks autonomous chaperone activity; binds native substrates and targets them for recognition by DnaK. Its activity is inhibited by the binding of CbpM. This chain is Curved DNA-binding protein, found in Salmonella choleraesuis (strain SC-B67).